We begin with the raw amino-acid sequence, 383 residues long: Chitinase-3-like protein 1 (383 aa).

The first 21 residues, 1–21, serve as a signal peptide directing secretion; that stretch reads MGLRVAQTGFVALVLLQSCAA. Residues 22–383 form the GH18 domain; sequence YKLVCYYTSW…SAIKDVLAAA (362 aa). A disulfide bridge connects residues Cys-26 and Cys-51. The N-linked (GlcNAc...) asparagine glycan is linked to Asn-60. Chitin-binding positions include 70–71, 97–100, Tyr-141, 204–207, and Arg-263; these read EW, GGWN, and LTYD. The cysteines at positions 300 and 364 are disulfide-linked. The important for AKT1 activation and IL8 production stretch occupies residues 324 to 338; that stretch reads QWVGYDDQESVKNKA. Residue Trp-352 participates in chitin binding.

The protein belongs to the glycosyl hydrolase 18 family. Monomer. As to expression, detected in smooth muscle cells in atherosclerotic plaques. Detected in regions of vascular occlusion in the aorta.

The protein localises to the secreted. It localises to the extracellular space. It is found in the cytoplasm. The protein resides in the perinuclear region. Its subcellular location is the endoplasmic reticulum. In terms of biological role, carbohydrate-binding lectin with a preference for chitin. Has no chitinase activity. May play a role in tissue remodeling and in the capacity of cells to respond to and cope with changes in their environment. Plays a role in T-helper cell type 2 (Th2) inflammatory response and IL-13-induced inflammation, regulating allergen sensitization, inflammatory cell apoptosis, dendritic cell accumulation and M2 macrophage differentiation. Facilitates invasion of pathogenic enteric bacteria into colonic mucosa and lymphoid organs. Mediates activation of AKT1 signaling pathway and subsequent IL8 production in colonic epithelial cells. Regulates antibacterial responses in lung by contributing to macrophage bacterial killing, controlling bacterial dissemination and augmenting host tolerance. Also regulates hyperoxia-induced injury, inflammation and epithelial apoptosis in lung. Stimulates migration and adhesion of cultured vascular smooth muscle cells. This Sus scrofa (Pig) protein is Chitinase-3-like protein 1 (CHI3L1).